The primary structure comprises 199 residues: MRLTAKQITWLKVCLHLAGFLPLLWLFWAINHGGLSADPVKDIQHFTGRTALKFLLATLLVSPLARYAKQPLLIRTRRLLGLWCFVWATLHLTSYALLELGIHNLALLGSELISRPYLTLGIISWLVLLALTLTSTQFAQRKLGKRWQTLHNVVYLVAILAPIHYLWSVKILSPQPVIYAALALALLALRYRRFRQWWR.

Transmembrane regions (helical) follow at residues 10–30, 82–102, 116–136, and 153–173; these read WLKVCLHLAGFLPLLWLFWAI, LWCFVWATLHLTSYALLELGI, PYLTLGIISWLVLLALTLTST, and VVYLVAILAPIHYLWSVKILS.

The protein belongs to the MsrQ family. As to quaternary structure, heterodimer of a catalytic subunit (MsrP) and a heme-binding subunit (MsrQ). Requires FMN as cofactor. Heme b is required as a cofactor.

The protein resides in the cell inner membrane. In terms of biological role, part of the MsrPQ system that repairs oxidized periplasmic proteins containing methionine sulfoxide residues (Met-O), using respiratory chain electrons. Thus protects these proteins from oxidative-stress damage caused by reactive species of oxygen and chlorine generated by the host defense mechanisms. MsrPQ is essential for the maintenance of envelope integrity under bleach stress, rescuing a wide series of structurally unrelated periplasmic proteins from methionine oxidation, including the primary periplasmic chaperone SurA and the lipoprotein Pal. MsrQ provides electrons for reduction to the reductase catalytic subunit MsrP, using the quinone pool of the respiratory chain. The chain is Protein-methionine-sulfoxide reductase heme-binding subunit MsrQ from Salmonella enteritidis PT4 (strain P125109).